The sequence spans 25 residues: Flagellar filament core protein flaB3 (25 aa).

The protein belongs to the bacterial flagellin family. In terms of assembly, the flagellum consists of an outer layer composed of two sheath proteins, flaA1 (44 kDa) and flaA2 (35 kDa) around a core that contains three proteins flaB1 (37 kDa), flaB2 (34 kDa) and flaB3 (32 kDa).

Its subcellular location is the periplasmic flagellum. It is found in the periplasm. Component of the core of the flagella. The sequence is that of Flagellar filament core protein flaB3 (flaB3) from Brachyspira hyodysenteriae (Treponema hyodysenteriae).